The primary structure comprises 177 residues: dCTP deaminase, dUMP-forming (177 aa).

DCTP-binding positions include 98 to 103 (RSSVGR), Asn110, 115 to 118 (DPGF), 123 to 125 (TLE), Gln144, 157 to 160 (YQGK), and Gln164. Residue Glu125 is the Proton donor/acceptor of the active site.

Belongs to the dCTP deaminase family. Homotrimer. Mg(2+) is required as a cofactor.

It catalyses the reaction dCTP + 2 H2O = dUMP + NH4(+) + diphosphate. It functions in the pathway pyrimidine metabolism; dUMP biosynthesis; dUMP from dCTP: step 1/1. Its activity is regulated as follows. Inhibited by dTTP. Its function is as follows. Bifunctional enzyme that catalyzes both the deamination of dCTP to dUTP and the hydrolysis of dUTP to dUMP without releasing the toxic dUTP intermediate. This chain is dCTP deaminase, dUMP-forming, found in Halalkalibacterium halodurans (strain ATCC BAA-125 / DSM 18197 / FERM 7344 / JCM 9153 / C-125) (Bacillus halodurans).